The primary structure comprises 522 residues: Glucans biosynthesis protein G (522 aa).

A signal peptide spans 1–33 (MPNNKFFVKSSKASLRWLGATVLLTLYALPSWA).

Belongs to the OpgD/OpgG family.

It localises to the periplasm. Its pathway is glycan metabolism; osmoregulated periplasmic glucan (OPG) biosynthesis. Involved in the biosynthesis of osmoregulated periplasmic glucans (OPGs). In Sodalis glossinidius (strain morsitans), this protein is Glucans biosynthesis protein G.